A 90-amino-acid chain; its full sequence is uncharacterized protein (90 aa).

The disordered stretch occupies residues 53–90; the sequence is WRARPDANDADTTSSSSSSETCTESDDSSDVPPARYAV. Low complexity predominate over residues 63-74; the sequence is DTTSSSSSSETC.

This is an uncharacterized protein from Orgyia pseudotsugata (Douglas-fir tussock moth).